We begin with the raw amino-acid sequence, 363 residues long: Phospho-N-acetylmuramoyl-pentapeptide-transferase (363 aa).

Helical transmembrane passes span 27 to 47, 76 to 96, 97 to 117, 137 to 157, 171 to 191, 202 to 222, 226 to 246, 248 to 268, 271 to 291, 292 to 312, and 340 to 360; these read AGAA…PLIA, TMGG…WADL, TDGY…VGFA, LGCE…LMPA, WLLP…TGFG, GLAI…SYLV, VFAD…CVFC, ALVG…AVFM, TGSL…KHEL, VLCI…IQVF, and KIVI…LATL.

It belongs to the glycosyltransferase 4 family. MraY subfamily. Requires Mg(2+) as cofactor.

The protein resides in the cell inner membrane. The catalysed reaction is UDP-N-acetyl-alpha-D-muramoyl-L-alanyl-gamma-D-glutamyl-meso-2,6-diaminopimeloyl-D-alanyl-D-alanine + di-trans,octa-cis-undecaprenyl phosphate = di-trans,octa-cis-undecaprenyl diphospho-N-acetyl-alpha-D-muramoyl-L-alanyl-D-glutamyl-meso-2,6-diaminopimeloyl-D-alanyl-D-alanine + UMP. Its pathway is cell wall biogenesis; peptidoglycan biosynthesis. Its function is as follows. Catalyzes the initial step of the lipid cycle reactions in the biosynthesis of the cell wall peptidoglycan: transfers peptidoglycan precursor phospho-MurNAc-pentapeptide from UDP-MurNAc-pentapeptide onto the lipid carrier undecaprenyl phosphate, yielding undecaprenyl-pyrophosphoryl-MurNAc-pentapeptide, known as lipid I. This Gluconacetobacter diazotrophicus (strain ATCC 49037 / DSM 5601 / CCUG 37298 / CIP 103539 / LMG 7603 / PAl5) protein is Phospho-N-acetylmuramoyl-pentapeptide-transferase.